Here is a 1017-residue protein sequence, read N- to C-terminus: Probable calcium-transporting ATPase 8, plasma membrane-type (1017 aa).

The Cytoplasmic segment spans residues 1 to 153; the sequence is MEKLDRYLQE…FVWDAFQDMT (153 aa). A run of 2 helical transmembrane segments spans residues 154–174 and 177–197; these read LIIL…TEGW and GMYD…VTAV. The Cytoplasmic segment spans residues 198 to 228; the sequence is SDYKQSLQFKELDNEKKKIFIHVTRDGRRQK. Helical transmembrane passes span 229 to 249 and 331 to 351; these read ISIY…DQVP and VATV…LVLL. The Cytoplasmic segment spans residues 352 to 384; sequence VRFLIDKGMTVGLLKWYSTDALTIVNYFATAVT. A helical membrane pass occupies residues 385–405; the sequence is IIVVAVPEGLPLAVTLSLAFA. The active-site 4-aspartylphosphate intermediate is Asp434. Asp736 and Asp740 together coordinate Mg(2+). The chain crosses the membrane as a helical span at residues 803 to 823; it reads IVALVINFVSACITGSAPLTA. Over 824–825 the chain is Cytoplasmic; it reads VQ. 2 helical membrane passes run 826–846 and 875–895; these read LLWV…TEPP and SLYQ…LLNI. Topologically, residues 896–938 are cytoplasmic; the sequence is KGADSKSIINTLIFNSFVFCQVFNEINSREMQKINVFRGIISN. 2 helical membrane passes run 939–959 and 973–993; these read WIFI…IEFL and WLLS…LKCI. Over 994 to 1017 the chain is Cytoplasmic; it reads PVGSGETSATPNGYRPLANGPDDI.

This sequence belongs to the cation transport ATPase (P-type) (TC 3.A.3) family. Type IIB subfamily.

The protein resides in the membrane. The enzyme catalyses Ca(2+)(in) + ATP + H2O = Ca(2+)(out) + ADP + phosphate + H(+). With respect to regulation, activated by calmodulin. Functionally, this magnesium-dependent enzyme catalyzes the hydrolysis of ATP coupled with the translocation of calcium from the cytosol out of the cell, into the endoplasmic reticulum, or into organelles. This chain is Probable calcium-transporting ATPase 8, plasma membrane-type, found in Oryza sativa subsp. japonica (Rice).